Here is a 427-residue protein sequence, read N- to C-terminus: Serine--tRNA ligase (427 aa).

235–237 (TSE) lines the L-serine pocket. An ATP-binding site is contributed by 266–268 (RSE). Position 289 (Glu-289) interacts with L-serine. Residue 353–356 (EISS) participates in ATP binding. Ser-388 contributes to the L-serine binding site.

It belongs to the class-II aminoacyl-tRNA synthetase family. Type-1 seryl-tRNA synthetase subfamily. Homodimer. The tRNA molecule binds across the dimer.

The protein localises to the cytoplasm. The enzyme catalyses tRNA(Ser) + L-serine + ATP = L-seryl-tRNA(Ser) + AMP + diphosphate + H(+). It catalyses the reaction tRNA(Sec) + L-serine + ATP = L-seryl-tRNA(Sec) + AMP + diphosphate + H(+). It participates in aminoacyl-tRNA biosynthesis; selenocysteinyl-tRNA(Sec) biosynthesis; L-seryl-tRNA(Sec) from L-serine and tRNA(Sec): step 1/1. In terms of biological role, catalyzes the attachment of serine to tRNA(Ser). Is also able to aminoacylate tRNA(Sec) with serine, to form the misacylated tRNA L-seryl-tRNA(Sec), which will be further converted into selenocysteinyl-tRNA(Sec). This chain is Serine--tRNA ligase, found in Chromobacterium violaceum (strain ATCC 12472 / DSM 30191 / JCM 1249 / CCUG 213 / NBRC 12614 / NCIMB 9131 / NCTC 9757 / MK).